The primary structure comprises 356 residues: GTPase HflX (356 aa).

A Hflx-type G domain is found at 180-356 (PSIGIVGYTN…KIYQLATQLS (177 aa)). Residues 186 to 193 (GYTNSGKT), 211 to 215 (FTTMS), 232 to 235 (DTVG), 300 to 303 (NKID), and 334 to 336 (SAL) each bind GTP. Mg(2+) contacts are provided by T193 and T213.

The protein belongs to the TRAFAC class OBG-HflX-like GTPase superfamily. HflX GTPase family. As to quaternary structure, monomer. Associates with the 50S ribosomal subunit. Does not associate with 70S ribosomes. Requires Mg(2+) as cofactor.

Its subcellular location is the cytoplasm. Its activity is regulated as follows. GTPase activity is stimulated by the presence of 50S ribosomal subunits. Hydrolysis is probably regulated by the HflX N-terminal domain. In terms of biological role, GTPase that associates with the 50S ribosomal subunit and may have a role during protein synthesis or ribosome biogenesis. Specific for GTP. This is GTPase HflX from Saccharolobus solfataricus (strain ATCC 35092 / DSM 1617 / JCM 11322 / P2) (Sulfolobus solfataricus).